The sequence spans 330 residues: Putative UV-damage endonuclease (330 aa).

This sequence belongs to the uve1/UvsE family.

Its subcellular location is the virion. Endonuclease for the repair of UV-irradiated DNA. The sequence is that of Putative UV-damage endonuclease from Acanthamoeba polyphaga mimivirus (APMV).